Reading from the N-terminus, the 178-residue chain is CASP-like protein 5B1 (178 aa).

At 1 to 37 the chain is on the cytoplasmic side; the sequence is MDASNPIVHPIGDHHAVDLEEGPLIVTMKELPGMPGT. The chain crosses the membrane as a helical span at residues 38–58; the sequence is IGGLALRVGQFLFAAAAIVIM. The Extracellular segment spans residues 59–69; sequence VTGDEFTNYTA. Asn-66 carries N-linked (GlcNAc...) asparagine glycosylation. A helical transmembrane segment spans residues 70 to 90; that stretch reads FCYLVAAMSLQFLWSFMLAIL. Residues 91 to 104 lie on the Cytoplasmic side of the membrane; it reads DTYALLIKRGLRNS. The helical transmembrane segment at 105-125 threads the bilayer; it reads VLLSLFVVGDWVTATLSLAAA. Topologically, residues 126-154 are extracellular; that stretch reads CSTAGVTVLFDNDLNYCGQMHCHRYQLSA. The helical transmembrane segment at 155-175 threads the bilayer; the sequence is AMAFLSWLLIGMSSLLTFWLW. The Cytoplasmic portion of the chain corresponds to 176 to 178; it reads ASE.

This sequence belongs to the Casparian strip membrane proteins (CASP) family. In terms of assembly, homodimer and heterodimers.

The protein localises to the cell membrane. This is CASP-like protein 5B1 from Ginkgo biloba (Ginkgo).